The primary structure comprises 173 residues: Small ribosomal subunit protein uS9 (173 aa).

Residues 1 to 15 (MTDTPTENLENTEVT) show a composition bias toward polar residues. 2 disordered regions span residues 1-26 (MTDT…EIAY) and 135-173 (EASR…YSKR). Residues 154-173 (KERKKAGLKKARKAPQYSKR) are compositionally biased toward basic residues.

The protein belongs to the universal ribosomal protein uS9 family.

This is Small ribosomal subunit protein uS9 from Cutibacterium acnes (strain DSM 16379 / KPA171202) (Propionibacterium acnes).